Here is a 184-residue protein sequence, read N- to C-terminus: Ribosome-recycling factor (184 aa).

It belongs to the RRF family.

It is found in the cytoplasm. Functionally, responsible for the release of ribosomes from messenger RNA at the termination of protein biosynthesis. May increase the efficiency of translation by recycling ribosomes from one round of translation to another. The polypeptide is Ribosome-recycling factor (Borrelia recurrentis (strain A1)).